We begin with the raw amino-acid sequence, 306 residues long: MNMKLKTLFAAAFAVVGFCSTASAVTYPLPTDGSRLVGQNQVITIPEGNTQPLEYFAAEYQMGLSNMMEANPGVDTFLPKGGTVLNIPQQLILPDTVHEGIVINSAEMRLYYYPKGTNTVIVLPIGIGQLGKDTPINWTTKVERKKAGPTWTPTAKMHAEYRAAGEPLPAVVPAGPDNPMGLYALYIGRLYAIHGTNANFGIGLRVSHGCVRLRNEDIKFLFEKVPVGTRVQFIDEPVKATTEPDGSRYIEVHNPLSTTEAQFEGQEIVPITLTKSVQTVTGQPDVDQVVLDEAIKNRSGMPVRLN.

A signal peptide spans 1–24 (MNMKLKTLFAAAFAVVGFCSTASA). In terms of domain architecture, L,D-TPase catalytic spans 99–234 (EGIVINSAEM…VPVGTRVQFI (136 aa)). The active-site Proton donor/acceptor is the His-194. Cys-210 acts as the Nucleophile in catalysis.

This sequence belongs to the YkuD family.

Its subcellular location is the periplasm. It participates in cell wall biogenesis; peptidoglycan biosynthesis. Responsible, at least in part, for anchoring of the major outer membrane lipoprotein (Lpp) to the peptidoglycan via a meso-diaminopimelyl-L-Lys- bond on the terminal residue of Lpp. This is Probable L,D-transpeptidase YbiS (ybiS) from Escherichia coli O6:H1 (strain CFT073 / ATCC 700928 / UPEC).